The following is a 72-amino-acid chain: UPF0270 protein plu0398 (72 aa).

This sequence belongs to the UPF0270 family.

This Photorhabdus laumondii subsp. laumondii (strain DSM 15139 / CIP 105565 / TT01) (Photorhabdus luminescens subsp. laumondii) protein is UPF0270 protein plu0398.